Here is a 460-residue protein sequence, read N- to C-terminus: Methylenetetrahydrofolate--tRNA-(uracil-5-)-methyltransferase TrmFO (460 aa).

Residue 12-17 participates in FAD binding; sequence GGGLAG.

This sequence belongs to the MnmG family. TrmFO subfamily. The cofactor is FAD.

The protein resides in the cytoplasm. It carries out the reaction uridine(54) in tRNA + (6R)-5,10-methylene-5,6,7,8-tetrahydrofolate + NADH + H(+) = 5-methyluridine(54) in tRNA + (6S)-5,6,7,8-tetrahydrofolate + NAD(+). The enzyme catalyses uridine(54) in tRNA + (6R)-5,10-methylene-5,6,7,8-tetrahydrofolate + NADPH + H(+) = 5-methyluridine(54) in tRNA + (6S)-5,6,7,8-tetrahydrofolate + NADP(+). Catalyzes the folate-dependent formation of 5-methyl-uridine at position 54 (M-5-U54) in all tRNAs. This Crocosphaera subtropica (strain ATCC 51142 / BH68) (Cyanothece sp. (strain ATCC 51142)) protein is Methylenetetrahydrofolate--tRNA-(uracil-5-)-methyltransferase TrmFO.